A 296-amino-acid polypeptide reads, in one-letter code: Formamidopyrimidine-DNA glycosylase (296 aa).

Catalysis depends on P2, which acts as the Schiff-base intermediate with DNA. E3 acts as the Proton donor in catalysis. The active-site Proton donor; for beta-elimination activity is K58. DNA is bound by residues H104, R126, and K169. The FPG-type zinc-finger motif lies at 260–296; it reads SVYDREGQACGTPGCGGTVARIVQAGRSTFYCAACQK. The active-site Proton donor; for delta-elimination activity is R286.

Belongs to the FPG family. As to quaternary structure, monomer. Requires Zn(2+) as cofactor.

It carries out the reaction Hydrolysis of DNA containing ring-opened 7-methylguanine residues, releasing 2,6-diamino-4-hydroxy-5-(N-methyl)formamidopyrimidine.. It catalyses the reaction 2'-deoxyribonucleotide-(2'-deoxyribose 5'-phosphate)-2'-deoxyribonucleotide-DNA = a 3'-end 2'-deoxyribonucleotide-(2,3-dehydro-2,3-deoxyribose 5'-phosphate)-DNA + a 5'-end 5'-phospho-2'-deoxyribonucleoside-DNA + H(+). Functionally, involved in base excision repair of DNA damaged by oxidation or by mutagenic agents. Acts as a DNA glycosylase that recognizes and removes damaged bases. Has a preference for oxidized purines, such as 7,8-dihydro-8-oxoguanine (8-oxoG). Has AP (apurinic/apyrimidinic) lyase activity and introduces nicks in the DNA strand. Cleaves the DNA backbone by beta-delta elimination to generate a single-strand break at the site of the removed base with both 3'- and 5'-phosphates. In Rhizobium etli (strain CIAT 652), this protein is Formamidopyrimidine-DNA glycosylase.